The chain runs to 341 residues: UDP-3-O-(3-hydroxymyristoyl)glucosamine N-acyltransferase (341 aa).

The Proton acceptor role is filled by histidine 239.

It belongs to the transferase hexapeptide repeat family. LpxD subfamily. Homotrimer.

The catalysed reaction is a UDP-3-O-[(3R)-3-hydroxyacyl]-alpha-D-glucosamine + a (3R)-hydroxyacyl-[ACP] = a UDP-2-N,3-O-bis[(3R)-3-hydroxyacyl]-alpha-D-glucosamine + holo-[ACP] + H(+). It carries out the reaction UDP-3-O-[(3R)-3-hydroxytetradecanoyl]-alpha-D-glucosamine + (3R)-hydroxytetradecanoyl-[ACP] = UDP-2-N,3-O-bis[(3R)-3-hydroxytetradecanoyl]-alpha-D-glucosamine + holo-[ACP] + H(+). The protein operates within glycolipid biosynthesis; lipid IV(A) biosynthesis; lipid IV(A) from (3R)-3-hydroxytetradecanoyl-[acyl-carrier-protein] and UDP-N-acetyl-alpha-D-glucosamine: step 3/6. Functionally, catalyzes the N-acylation of UDP-3-O-(hydroxytetradecanoyl)glucosamine using 3-hydroxytetradecanoyl-ACP as the acyl donor. Is involved in the biosynthesis of lipid A, a phosphorylated glycolipid that anchors the lipopolysaccharide to the outer membrane of the cell. The protein is UDP-3-O-(3-hydroxymyristoyl)glucosamine N-acyltransferase of Escherichia coli (strain UTI89 / UPEC).